The following is a 61-amino-acid chain: Protein translocase subunit SecE (61 aa).

The helical transmembrane segment at 39–59 (LGIILIGLIGMLIRIMGILVL) threads the bilayer.

Belongs to the SecE/SEC61-gamma family. Component of the Sec protein translocase complex. Heterotrimer consisting of SecY (alpha), SecG (beta) and SecE (gamma) subunits. The heterotrimers can form oligomers, although 1 heterotrimer is thought to be able to translocate proteins. Interacts with the ribosome. May interact with SecDF, and other proteins may be involved.

Its subcellular location is the cell membrane. Essential subunit of the Sec protein translocation channel SecYEG. Clamps together the 2 halves of SecY. May contact the channel plug during translocation. This is Protein translocase subunit SecE from Pyrococcus abyssi (strain GE5 / Orsay).